The sequence spans 424 residues: O-methyltransferase aunD (424 aa).

D275 is an S-adenosyl-L-methionine binding site. The active-site Proton acceptor is the H326.

The protein belongs to the class I-like SAM-binding methyltransferase superfamily. Cation-independent O-methyltransferase family.

It functions in the pathway secondary metabolite biosynthesis. In terms of biological role, O-methyltransferase; part of the gene cluster that mediates the biosynthesis of aurasperone B, a dimeric gamma-naphthopyrone. The first step in the biosynthesis of aurasperone B is the production of gamma-naphthopyrone precursor YWA1 by the non-reducing polyketide synthase albA, via condensation of one acetyl-CoA starter unit with 6 malonyl-CoA units. YWA1 is then methylated by aunE at position C-6 to yield foncesin which is further methylated at position C-8 by aunD to produce fonsecin B. A key enzyme in the biosynthetic pathway is the cytochrome P450 monooxygenase aunB which catalyzes the oxidative dimerization of fonsecin B to aurasperone B. AunB also catalyzes the oxidative dimerization of rubrofusarin B into aurasperone A. The polypeptide is O-methyltransferase aunD (Aspergillus niger (strain ATCC 1015 / CBS 113.46 / FGSC A1144 / LSHB Ac4 / NCTC 3858a / NRRL 328 / USDA 3528.7)).